A 213-amino-acid polypeptide reads, in one-letter code: Homeobox protein koza (213 aa).

Residues 24 to 72 (ILSHMGPGSKEKSLGFPKTDQDQDSSLRDTEEKYASEKLQSSSQPAEIH) are disordered. The span at 32–59 (SKEKSLGFPKTDQDQDSSLRDTEEKYAS) shows a compositional bias: basic and acidic residues. The homeobox DNA-binding region spans 102-161 (QKRSRAAFSHSQVIELERKFSSQKYLSAPERAQLAKSLKLTETQVKIWFQNRRYKTKRKQ).

It belongs to the NK-3 homeobox family. As to expression, expressed in the muscle layer of embryonic somites. In tailbud embryos, expressed throughout the entire myotome but at the mid-tailbud stage (stage 32), expression becomes restricted to the outer periphery of the somite so that by the tadpole stage only the outer, type I cells show expression. Also expressed in the dorsal cement gland and in the myocardial layer of the developing heart. In all tissues, expression begins after terminal differentiation.

It localises to the nucleus. Functionally, may regulate cell proliferation in a tissue-specific manner. The sequence is that of Homeobox protein koza from Xenopus laevis (African clawed frog).